Reading from the N-terminus, the 198-residue chain is MSTVLSVTKRETGHRSTLTQLRKGGAIPAVIYGYKLDSTPISISAKEFKKSIQKNGQNSVFSLDLEGKKVNVVVSEVQQCSLKDEVNHVDFLAINMAEELEVDVPIKLIGQSVGVSEGGILMQPNLELKVKVKPAELPDSIEVDISSLKVGESLTVAEIRHQTPVEIISEDDYLLVTIVAPVSAEQEEVSASVEEEQV.

The protein belongs to the bacterial ribosomal protein bL25 family. CTC subfamily. As to quaternary structure, part of the 50S ribosomal subunit; part of the 5S rRNA/L5/L18/L25 subcomplex. Contacts the 5S rRNA. Binds to the 5S rRNA independently of L5 and L18.

In terms of biological role, this is one of the proteins that binds to the 5S RNA in the ribosome where it forms part of the central protuberance. This chain is Large ribosomal subunit protein bL25, found in Lysinibacillus sphaericus (strain C3-41).